Reading from the N-terminus, the 542-residue chain is Protein phosphatase 1G (542 aa).

The N-myristoyl glycine moiety is linked to residue glycine 2. Position 22 is an omega-N-methylarginine (arginine 22). One can recognise a PPM-type phosphatase domain in the interval 26 to 502 (PYGFSAMQGW…DNMTCIIICF (477 aa)). Mn(2+) contacts are provided by aspartate 60 and glycine 61. Disordered regions lie at residues 117 to 136 (IAGR…DEDD) and 164 to 325 (CQKV…SDSG). The residue at position 122 (threonine 122) is a Phosphothreonine. 2 stretches are compositionally biased toward acidic residues: residues 123 to 136 (EDED…DEDD) and 259 to 309 (DSED…DEEM). Lysine 380 carries the post-translational modification N6-acetyllysine. Residues aspartate 438 and aspartate 493 each contribute to the Mn(2+) site. The tract at residues 513–542 (ESGKRKLEEALSTEGAEDTGNSDKKKAKRD) is disordered. A Phosphoserine modification is found at serine 524.

It belongs to the PP2C family. Interacts with NOL3; may dephosphorylate NOL3. Requires Mg(2+) as cofactor. The cofactor is Mn(2+). As to expression, highly expressed in testis. Low level of expression in kidney. Also expressed in a number of tissues undergoing proliferation including embryo, uterus at pregnancy, placenta, and ovaries.

It localises to the nucleus. Its subcellular location is the membrane. The enzyme catalyses O-phospho-L-seryl-[protein] + H2O = L-seryl-[protein] + phosphate. It carries out the reaction O-phospho-L-threonyl-[protein] + H2O = L-threonyl-[protein] + phosphate. May be involved in regulation of cell cycle. In Mus musculus (Mouse), this protein is Protein phosphatase 1G (Ppm1g).